The primary structure comprises 516 residues: GMP synthase [glutamine-hydrolyzing] (516 aa).

The 191-residue stretch at 8–198 (KILILDFGSQ…VVNICGCDTL (191 aa)) folds into the Glutamine amidotransferase type-1 domain. Cys-84 (nucleophile) is an active-site residue. Catalysis depends on residues His-172 and Glu-174. The GMPS ATP-PPase domain occupies 199–391 (WNIENIIEND…LGLPYNMLYR (193 aa)). 226-232 (SGGVDSS) contacts ATP.

In terms of assembly, homodimer.

The catalysed reaction is XMP + L-glutamine + ATP + H2O = GMP + L-glutamate + AMP + diphosphate + 2 H(+). The protein operates within purine metabolism; GMP biosynthesis; GMP from XMP (L-Gln route): step 1/1. Its function is as follows. Catalyzes the synthesis of GMP from XMP. The protein is GMP synthase [glutamine-hydrolyzing] of Francisella tularensis subsp. holarctica (strain FTNF002-00 / FTA).